The following is a 102-amino-acid chain: ATP-dependent Clp protease adapter protein ClpS (102 aa).

It belongs to the ClpS family. Binds to the N-terminal domain of the chaperone ClpA.

Involved in the modulation of the specificity of the ClpAP-mediated ATP-dependent protein degradation. This is ATP-dependent Clp protease adapter protein ClpS from Nitrosospira multiformis (strain ATCC 25196 / NCIMB 11849 / C 71).